A 203-amino-acid chain; its full sequence is GTP-binding protein YPTC1 (203 aa).

GTP-binding positions include 15 to 23, 33 to 40, 63 to 67, 121 to 124, and 151 to 153; these read GDSGVGKSC, YTESYIST, DTAGQ, NKSD, and SAK. The short motif at 37-45 is the Effector region element; it reads YISTIGVDF. The tract at residues 174–203 is disordered; the sequence is ASQPIPTKAGGPVVRPQEGKPINSKSSSCC. 2 S-geranylgeranyl cysteine lipidation sites follow: Cys202 and Cys203.

The protein belongs to the small GTPase superfamily. Rab family.

It is found in the cell membrane. Its function is as follows. Protein transport. Probably involved in vesicular traffic. In Chlamydomonas reinhardtii (Chlamydomonas smithii), this protein is GTP-binding protein YPTC1 (YPTC1).